We begin with the raw amino-acid sequence, 131 residues long: Holo-[acyl-carrier-protein] synthase (131 aa).

D8 and E57 together coordinate Mg(2+).

The protein belongs to the P-Pant transferase superfamily. AcpS family. Requires Mg(2+) as cofactor.

It localises to the cytoplasm. It carries out the reaction apo-[ACP] + CoA = holo-[ACP] + adenosine 3',5'-bisphosphate + H(+). In terms of biological role, transfers the 4'-phosphopantetheine moiety from coenzyme A to a Ser of acyl-carrier-protein. This is Holo-[acyl-carrier-protein] synthase from Desulforudis audaxviator (strain MP104C).